The sequence spans 492 residues: MKKLKITGLSLIISGLLMAQAQAAEPVYPDQLRLFSLGQEVCGDKYRPVNREEAQSVKSNIVGMMGQWQISGLANGWVIMGPGYNGEIKPGSASSTWCYPTNPATGEIPTLSALDIPDGDEVDVQWRLVHDSANFIKPTSYLAHYLGYAWVGGNHSQYVGEDMDVTRDGDGWVIRGNNDGGCDGYRCGDKTSIKVSNFAYNLDPDSFKHGDVTQSDRQLVKTVVGWAINDSDTPQSGYDVTLRYDTATNWSKTNTYGLSEKVTTKNKFKWPLVGETELSIEIAANQSWASQNGGSPTTSLSQSVRPTVPAHSKIPVKIELYKADISYPYEFKADVSYDLTLSGFLRWGGNAWYTHPDNRPNWNHTFVIGPYKDKASSIRYQWDKRYIPGEVKWWDWNWTIQQNGLPTMQNNLAKVLRPVRAGITGDFSAESQFAGNIEIGAPVPVAAASHSSRARNLSAGQGLRLEIPLDAQELSGLGFNNVSLSVTPAANQ.

Positions 1–23 (MKKLKITGLSLIISGLLMAQAQA) are cleaved as a signal peptide. 2 disulfides stabilise this stretch: cysteine 42–cysteine 98 and cysteine 182–cysteine 187. The segment at 68–84 (WQISGLANGWVIMGPGY) is interaction with host N-linked glycan. Residues 256 to 288 (YGLSEKVTTKNKFKWPLVGETELSIEIAANQSW) are part of the transmembrane beta-barrel after proteolytic activation of the toxin and insertion into the host membrane. Residues 346–355 (RWGGNAWYTH) form an interaction with glycans from host GPI-anchor region. Positions 446 to 492 (AAASHSSRARNLSAGQGLRLEIPLDAQELSGLGFNNVSLSVTPAANQ) are excised as a propeptide.

This sequence belongs to the aerolysin family. Homodimer in solution; homoheptamer in the host membrane. After binding to GPI-anchored proteins in target membranes and proteolytic removal of the C-terminal propeptide, the protein assembles into a heptameric pre-pore complex. A further conformation change leads to insertion into the host membrane. Proteolytic cleavage and subsequent release of the propeptide trigger a major conformation change, leading to the formation of a heptameric pre-pore that then inserts into the host membrane.

It is found in the secreted. The protein localises to the host cell membrane. In terms of biological role, secreted, cytolytic toxin that forms pores in host membranes after proteolytic removal of a C-terminal propeptide, leading to destruction of the membrane permeability barrier and cell death. The pores are formed by transmembrane beta-strands and are approximately 3 nm in diameter. The polypeptide is Aerolysin-3 (ahh3) (Aeromonas hydrophila).